A 409-amino-acid polypeptide reads, in one-letter code: Phosphopentomutase (409 aa).

Mn(2+) contacts are provided by D10, D308, H313, D349, H350, and H361.

This sequence belongs to the phosphopentomutase family. It depends on Mn(2+) as a cofactor.

It localises to the cytoplasm. It carries out the reaction 2-deoxy-alpha-D-ribose 1-phosphate = 2-deoxy-D-ribose 5-phosphate. The enzyme catalyses alpha-D-ribose 1-phosphate = D-ribose 5-phosphate. Its pathway is carbohydrate degradation; 2-deoxy-D-ribose 1-phosphate degradation; D-glyceraldehyde 3-phosphate and acetaldehyde from 2-deoxy-alpha-D-ribose 1-phosphate: step 1/2. Isomerase that catalyzes the conversion of deoxy-ribose 1-phosphate (dRib-1-P) and ribose 1-phosphate (Rib-1-P) to deoxy-ribose 5-phosphate (dRib-5-P) and ribose 5-phosphate (Rib-5-P), respectively. This Buchnera aphidicola subsp. Schizaphis graminum (strain Sg) protein is Phosphopentomutase.